The sequence spans 167 residues: SsrA-binding protein (167 aa).

Positions 144-167 (HDKRAADKEKQSKKEVRSAMAKYQ) are disordered. Over residues 146–160 (KRAADKEKQSKKEVR) the composition is skewed to basic and acidic residues.

This sequence belongs to the SmpB family.

The protein localises to the cytoplasm. Functionally, required for rescue of stalled ribosomes mediated by trans-translation. Binds to transfer-messenger RNA (tmRNA), required for stable association of tmRNA with ribosomes. tmRNA and SmpB together mimic tRNA shape, replacing the anticodon stem-loop with SmpB. tmRNA is encoded by the ssrA gene; the 2 termini fold to resemble tRNA(Ala) and it encodes a 'tag peptide', a short internal open reading frame. During trans-translation Ala-aminoacylated tmRNA acts like a tRNA, entering the A-site of stalled ribosomes, displacing the stalled mRNA. The ribosome then switches to translate the ORF on the tmRNA; the nascent peptide is terminated with the 'tag peptide' encoded by the tmRNA and targeted for degradation. The ribosome is freed to recommence translation, which seems to be the essential function of trans-translation. In Synechococcus sp. (strain CC9902), this protein is SsrA-binding protein.